The chain runs to 303 residues: CDAN1-interacting nuclease 1 (303 aa).

The protein resides in the nucleus. It localises to the cytoplasm. Its function is as follows. May play a role in erythroid cell differentiation. This Xenopus tropicalis (Western clawed frog) protein is CDAN1-interacting nuclease 1 (cdin1).